We begin with the raw amino-acid sequence, 553 residues long: Dihydroxy-acid dehydratase (553 aa).

Asp78 serves as a coordination point for Mg(2+). Cys119 is a [2Fe-2S] cluster binding site. 2 residues coordinate Mg(2+): Asp120 and Lys121. Position 121 is an N6-carboxylysine (Lys121). Residue Cys193 coordinates [2Fe-2S] cluster. A Mg(2+)-binding site is contributed by Glu441. Residue Ser467 is the Proton acceptor of the active site.

The protein belongs to the IlvD/Edd family. As to quaternary structure, homodimer. The cofactor is [2Fe-2S] cluster. It depends on Mg(2+) as a cofactor.

The catalysed reaction is (2R)-2,3-dihydroxy-3-methylbutanoate = 3-methyl-2-oxobutanoate + H2O. The enzyme catalyses (2R,3R)-2,3-dihydroxy-3-methylpentanoate = (S)-3-methyl-2-oxopentanoate + H2O. It functions in the pathway amino-acid biosynthesis; L-isoleucine biosynthesis; L-isoleucine from 2-oxobutanoate: step 3/4. It participates in amino-acid biosynthesis; L-valine biosynthesis; L-valine from pyruvate: step 3/4. Functions in the biosynthesis of branched-chain amino acids. Catalyzes the dehydration of (2R,3R)-2,3-dihydroxy-3-methylpentanoate (2,3-dihydroxy-3-methylvalerate) into 2-oxo-3-methylpentanoate (2-oxo-3-methylvalerate) and of (2R)-2,3-dihydroxy-3-methylbutanoate (2,3-dihydroxyisovalerate) into 2-oxo-3-methylbutanoate (2-oxoisovalerate), the penultimate precursor to L-isoleucine and L-valine, respectively. This Trichlorobacter lovleyi (strain ATCC BAA-1151 / DSM 17278 / SZ) (Geobacter lovleyi) protein is Dihydroxy-acid dehydratase.